A 107-amino-acid chain; its full sequence is Phosphoribosyl-ATP pyrophosphatase (107 aa).

Belongs to the PRA-PH family.

Its subcellular location is the cytoplasm. It catalyses the reaction 1-(5-phospho-beta-D-ribosyl)-ATP + H2O = 1-(5-phospho-beta-D-ribosyl)-5'-AMP + diphosphate + H(+). Its pathway is amino-acid biosynthesis; L-histidine biosynthesis; L-histidine from 5-phospho-alpha-D-ribose 1-diphosphate: step 2/9. The sequence is that of Phosphoribosyl-ATP pyrophosphatase from Bacillus cereus (strain G9842).